We begin with the raw amino-acid sequence, 704 residues long: Elongation factor G 1 (704 aa).

The tr-type G domain occupies 8–291; the sequence is ERYRNIGISA…AVIDYLPSPA (284 aa). GTP contacts are provided by residues 17–24, 88–92, and 142–145; these read AHIDAGKT, DTPGH, and NKMD.

This sequence belongs to the TRAFAC class translation factor GTPase superfamily. Classic translation factor GTPase family. EF-G/EF-2 subfamily.

It localises to the cytoplasm. In terms of biological role, catalyzes the GTP-dependent ribosomal translocation step during translation elongation. During this step, the ribosome changes from the pre-translocational (PRE) to the post-translocational (POST) state as the newly formed A-site-bound peptidyl-tRNA and P-site-bound deacylated tRNA move to the P and E sites, respectively. Catalyzes the coordinated movement of the two tRNA molecules, the mRNA and conformational changes in the ribosome. In Burkholderia pseudomallei (strain 1710b), this protein is Elongation factor G 1.